Consider the following 910-residue polypeptide: Leucine--tRNA ligase (910 aa).

Positions 42-52 match the 'HIGH' region motif; sequence PYPSGKLHMGH. Positions 658-662 match the 'KMSKS' region motif; that stretch reads TMSKS. K661 contributes to the ATP binding site.

The protein belongs to the class-I aminoacyl-tRNA synthetase family.

It localises to the cytoplasm. It catalyses the reaction tRNA(Leu) + L-leucine + ATP = L-leucyl-tRNA(Leu) + AMP + diphosphate. The protein is Leucine--tRNA ligase of Acidovorax sp. (strain JS42).